We begin with the raw amino-acid sequence, 434 residues long: Tryptophan synthase beta chain 2 (434 aa).

At K110 the chain carries N6-(pyridoxal phosphate)lysine.

Belongs to the TrpB family. As to quaternary structure, tetramer of two alpha and two beta chains. Pyridoxal 5'-phosphate is required as a cofactor.

It catalyses the reaction (1S,2R)-1-C-(indol-3-yl)glycerol 3-phosphate + L-serine = D-glyceraldehyde 3-phosphate + L-tryptophan + H2O. It functions in the pathway amino-acid biosynthesis; L-tryptophan biosynthesis; L-tryptophan from chorismate: step 5/5. In terms of biological role, the beta subunit is responsible for the synthesis of L-tryptophan from indole and L-serine. The chain is Tryptophan synthase beta chain 2 (trpB2) from Aquifex aeolicus (strain VF5).